Consider the following 20-residue polypeptide: SHDVNINIQFGFENPQQVVD.

The polypeptide is Unknown protein NF045 from 2D-PAGE (Naegleria fowleri (Brain eating amoeba)).